Here is a 252-residue protein sequence, read N- to C-terminus: Hydroxyacylglutathione hydrolase (252 aa).

Zn(2+) is bound by residues histidine 54, histidine 56, aspartate 58, histidine 59, histidine 111, aspartate 128, and histidine 166.

The protein belongs to the metallo-beta-lactamase superfamily. Glyoxalase II family. Monomer. Zn(2+) serves as cofactor.

The catalysed reaction is an S-(2-hydroxyacyl)glutathione + H2O = a 2-hydroxy carboxylate + glutathione + H(+). It functions in the pathway secondary metabolite metabolism; methylglyoxal degradation; (R)-lactate from methylglyoxal: step 2/2. Thiolesterase that catalyzes the hydrolysis of S-D-lactoyl-glutathione to form glutathione and D-lactic acid. In Vibrio cholerae serotype O1 (strain ATCC 39541 / Classical Ogawa 395 / O395), this protein is Hydroxyacylglutathione hydrolase.